A 1203-amino-acid chain; its full sequence is Cation-transporting ATPase catp-5 (1203 aa).

The Cytoplasmic portion of the chain corresponds to 1-68 (MNTSEREPLL…YAYKETIGRQ (68 aa)). Positions 21–42 (TTDNPSTKIMKREKDNPKAKTT) are disordered. Residues 69-89 (ILFWLLTIVTLGFYQLLAYWV) traverse the membrane as a helical segment. At 90–209 (KSLFVKVRFQ…RKIYNMNALA (120 aa)) the chain is on the extracellular side. A helical membrane pass occupies residues 210 to 230 (LALTPILVILFKEVLGPFYLF). Topologically, residues 231 to 242 (QCFSVALWYSDN) are cytoplasmic. A helical transmembrane segment spans residues 243-263 (YAYYASVIVIITVGSAAVAVY). The Extracellular segment spans residues 264–297 (QMRAQEKRIRNMVGDTISVIVRRDGHDITIDASE). A helical transmembrane segment spans residues 298–318 (IVPMDILILPSNTFILPCDCL). The Cytoplasmic portion of the chain corresponds to 319–414 (LMNGTVIVNE…KPQEKEALKD (96 aa)). Residues 415-435 (VMVFILVLGFIALIGFIYTVI) form a helical membrane-spanning segment. The Extracellular portion of the chain corresponds to 436-451 (EMVSRGESLKHIIIRS). A helical membrane pass occupies residues 452–472 (LDIITIVVPPALPAAMSVGII). At 473–935 (NANSRLKKKK…KEGRCALVTS (463 aa)) the chain is on the cytoplasmic side. Asp-503 serves as the catalytic 4-aspartylphosphate intermediate. The tract at residues 595–617 (ETQDFDTVQPTVLRPPPEQATYH) is disordered. Residues Asp-883 and Asp-887 each contribute to the Mg(2+) site. Residues 936-956 (YAVSKYMAAYSLNEFLSVMLL) traverse the membrane as a helical segment. At 957–962 (YNDGTN) the chain is on the extracellular side. A helical membrane pass occupies residues 963 to 983 (ISDGQFLYIDLVLITLVALFL). Topologically, residues 984–1007 (GNTEASRKLSGIPPPRRLATSAFY) are cytoplasmic. Residues 1008 to 1028 (FSVFGQMFFNIITQTTGYLLV) traverse the membrane as a helical segment. The Extracellular segment spans residues 1029–1046 (RGQSWYVPNPEELDNTTT). A helical membrane pass occupies residues 1047 to 1067 (MIGTTVFFTSCCMYLGYAFVY). At 1068 to 1085 (SKGHPYRRSVFTNWLLCG) the chain is on the cytoplasmic side. A helical transmembrane segment spans residues 1086 to 1106 (IIFVIGAINMVMIFTNMGFLM). Residues 1107-1120 (NLMGFVYVPSTSMR) lie on the Extracellular side of the membrane. The helical transmembrane segment at 1121–1141 (FILLAISLAGVFLSLLYEHFF) threads the bilayer. Residues 1142-1203 (VEKVVAIHFE…DRKETIESKC (62 aa)) lie on the Cytoplasmic side of the membrane.

Belongs to the cation transport ATPase (P-type) (TC 3.A.3) family. Type V subfamily. As to expression, expressed in the 20 intestinal cells and in the excretory cell.

Its subcellular location is the apical cell membrane. The enzyme catalyses ATP + H2O = ADP + phosphate + H(+). Its function is as follows. Involved in the uptake and/or transport of polyamines, probably through ATP hydrolysis. This contributes to the maintenance of intracellular polyamine levels. Polyamines are essential for cell proliferation and are implicated in cellular processes, ranging from DNA replication to apoptosis. The polypeptide is Cation-transporting ATPase catp-5 (Caenorhabditis elegans).